The chain runs to 199 residues: Fe/S biogenesis protein NfuA (199 aa).

Residues cysteine 151 and cysteine 154 each coordinate [4Fe-4S] cluster.

It belongs to the NfuA family. Homodimer. The cofactor is [4Fe-4S] cluster.

Functionally, involved in iron-sulfur cluster biogenesis. Binds a 4Fe-4S cluster, can transfer this cluster to apoproteins, and thereby intervenes in the maturation of Fe/S proteins. Could also act as a scaffold/chaperone for damaged Fe/S proteins. The polypeptide is Fe/S biogenesis protein NfuA (Xanthomonas oryzae pv. oryzae (strain MAFF 311018)).